A 120-amino-acid chain; its full sequence is Large ribosomal subunit protein eL34x (120 aa).

The interval 31–50 is disordered; it reads TYQTTNKRASGPKCPVTGKR.

Belongs to the eukaryotic ribosomal protein eL34 family.

This Arabidopsis thaliana (Mouse-ear cress) protein is Large ribosomal subunit protein eL34x (RPL34C).